A 215-amino-acid chain; its full sequence is Chloramphenicol acetyltransferase (215 aa).

Catalysis depends on His-189, which acts as the Proton acceptor.

Belongs to the chloramphenicol acetyltransferase family. As to quaternary structure, homotrimer.

It catalyses the reaction chloramphenicol + acetyl-CoA = chloramphenicol 3-acetate + CoA. Its function is as follows. This enzyme is an effector of chloramphenicol resistance in bacteria. This Staphylococcus aureus protein is Chloramphenicol acetyltransferase (cat).